A 255-amino-acid chain; its full sequence is Small ribosomal subunit protein eS1 (255 aa).

Basic residues predominate over residues 1-18; that stretch reads MAVGKNKRLSKGKKGLKK. The segment at 1–28 is disordered; it reads MAVGKNKRLSKGKKGLKKRTQDPFSRKD. An N-acetylalanine; partial modification is found at alanine 2. Over residues 19–28 the composition is skewed to basic and acidic residues; sequence RTQDPFSRKD.

Belongs to the eukaryotic ribosomal protein eS1 family. As to quaternary structure, component of the small ribosomal subunit. Mature ribosomes consist of a small (40S) and a large (60S) subunit. The 40S subunit contains about 33 different proteins and 1 molecule of RNA (18S). The 60S subunit contains about 49 different proteins and 3 molecules of RNA (25S, 5.8S and 5S).

It is found in the cytoplasm. This Ajellomyces capsulatus (strain G186AR / H82 / ATCC MYA-2454 / RMSCC 2432) (Darling's disease fungus) protein is Small ribosomal subunit protein eS1.